Consider the following 173-residue polypeptide: uncharacterized protein (173 aa).

Positions 1–15 (MERKLSQRAGNTFKG) are cleaved as a propeptide — leader sequence. Phenylalanine 16 carries the N-methylphenylalanine modification. Residues 16 to 37 (FTLVEVLITLAIISLVFSLILI) traverse the membrane as a helical segment.

Its subcellular location is the membrane. This is an uncharacterized protein from Aquifex aeolicus (strain VF5).